Consider the following 578-residue polypeptide: Putative transporter B0361.11 (578 aa).

Residues 1 to 30 (MSISRRSYEQFDEMKSENQENNSKKKSSER) form a disordered region. 11 helical membrane passes run 51 to 71 (IFTY…MYIM), 148 to 168 (FGLT…SMLA), 182 to 202 (ILAF…IFLI), 232 to 252 (AWIT…TLLV), 263 to 283 (YFIV…LPES), 339 to 359 (IWLL…YFAI), 373 to 393 (AFLY…PLMM), 399 to 419 (MIVI…TVFL), 426 to 446 (LVIM…HPIW), 457 to 477 (SLCF…SPYV), and 486 to 506 (WIPF…AFML). Low complexity predominate over residues 532-550 (AYRRSKSSSSSVSALSKTS). A disordered region spans residues 532 to 561 (AYRRSKSSSSSVSALSKTSVRSKKTLSSES).

The protein belongs to the major facilitator superfamily. Sugar transporter (TC 2.A.1.1) family.

The protein resides in the membrane. The sequence is that of Putative transporter B0361.11 from Caenorhabditis elegans.